Reading from the N-terminus, the 235-residue chain is Ribitol-5-phosphate cytidylyltransferase (235 aa).

CTP is bound by residues 7-10 (LAGG), 82-88 (GADRNTS), and Ser113.

Belongs to the IspD/TarI cytidylyltransferase family. TarI subfamily.

The enzyme catalyses D-ribitol 5-phosphate + CTP + H(+) = CDP-L-ribitol + diphosphate. It participates in cell wall biogenesis; poly(ribitol phosphate) teichoic acid biosynthesis. In terms of biological role, catalyzes the transfer of the cytidylyl group of CTP to D-ribitol 5-phosphate. In Streptococcus pneumoniae (strain Hungary19A-6), this protein is Ribitol-5-phosphate cytidylyltransferase.